The sequence spans 64 residues: Large ribosomal subunit protein bL33c (64 aa).

Belongs to the bacterial ribosomal protein bL33 family.

It localises to the plastid. It is found in the chloroplast. The sequence is that of Large ribosomal subunit protein bL33c from Huperzia lucidula (Shining clubmoss).